Consider the following 64-residue polypeptide: Small ribosomal subunit protein bS21 (64 aa).

The tract at residues 26–64 is disordered; that stretch reads DGILSEARRRTRFERPPTRRKRKDAAKRRLAIKAARKAT. Residues 43-64 are compositionally biased toward basic residues; the sequence is TRRKRKDAAKRRLAIKAARKAT.

Belongs to the bacterial ribosomal protein bS21 family.

The chain is Small ribosomal subunit protein bS21 from Dehalococcoides mccartyi (strain ATCC BAA-2100 / JCM 16839 / KCTC 5957 / BAV1).